Here is a 492-residue protein sequence, read N- to C-terminus: MDPSKFRPSSAYDSPFLTTNAGGPVYNNVSSLTVGPRGPVLLEDYHLIEKLATFDRERIPERVVHARGASAKGFFEVTHDISHLTCADFLRAPGVQTPVIVRFSTVVHERGSPESLRDIRGFAVKFYTREGNFDLVGNNVPVFFNRDAKSFPDTIRALKPNPKSHIQEYWRILDFFSFLPESLHTFAWFFDDVCLPINYRHMEGYGVHAYQLINKAGKAHYVKFHWKPTCGVKCMTEEEAIRVGGTNHSHATKDLYDSIAVGNYPEWKLSIHIMDPEDVERFDFDPLDVTKIWPEDILPLMPVGRLVLNRNIDNFFAENEQLAFNPGHIVPGLYYSEDKLLQTRIFAYADTQRHRIGPNYMQLPVNAPKCAHHNNHRDGAMNFMHRDEEVDYLPSRFDPCRHAEQYPIPSRVLNGRREMCVIEKENNFKQAGERYRSWEPDRQDRYVSKWVEHLSDPRVTYEIRSIWISYLSQADKSCGQKVASRLTLKPTM.

Catalysis depends on residues H65 and N138. Residue Y348 coordinates heme.

It belongs to the catalase family. As to quaternary structure, homotetramer. It depends on heme as a cofactor.

The protein resides in the peroxisome. The catalysed reaction is 2 H2O2 = O2 + 2 H2O. In terms of biological role, occurs in almost all aerobically respiring organisms and serves to protect cells from the toxic effects of hydrogen peroxide. This is Catalase isozyme 2 (CAT2) from Nicotiana plumbaginifolia (Leadwort-leaved tobacco).